The primary structure comprises 1117 residues: Leucine-rich repeats and immunoglobulin-like domains protein 3 (1117 aa).

The N-terminal stretch at 1-24 is a signal peptide; it reads MGAPGLRAATAALGLLLCAGLGRA. Residues 38–74 form the LRRNT domain; it reads LLDDDAQRPCPAACHCLGDLLDCSRRRLVRLPDPLPA. LRR repeat units follow at residues 75–98, 99–120, 122–143, 146–168, 169–189, 193–214, 216–237, 240–261, 264–285, 288–309, 312–333, 336–357, 360–382, 387–408, and 411–432; these read WVTR…SHLQ, SLQE…GSIS, NIRQ…QLEA, SLET…PPLQ, LKYL…YFDN, TLLV…MFKL, QLQH…TFQG, ALKS…AFWG, NMEV…WLYG, MLRE…AWEF, KLSE…SFLG, LLNA…AFRG, SLKT…SGAF, RLRQ…AFAG, and TLEH…AFSQ. A glycan (N-linked (GlcNAc...) asparagine) is linked at Asn-156. An N-linked (GlcNAc...) asparagine glycan is attached at Asn-274. Residues Asn-442 and Asn-469 are each glycosylated (N-linked (GlcNAc...) asparagine). The 52-residue stretch at 444–495 folds into the LRRCT domain; the sequence is SSLLCDCQLRWLPQWVAENNFQSFVNASCAHPQLLKGRSIFTVSPDGFVCDD. 3 consecutive Ig-like C2-type domains span residues 499-598, 603-692, and 697-783; these read PQIT…AKLT, PSFT…ATLT, and PSFL…VRLS. 2 disulfides stabilise this stretch: Cys-520–Cys-581 and Cys-624–Cys-676. 2 N-linked (GlcNAc...) asparagine glycosylation sites follow: Asn-688 and Asn-729. A disulfide bond links Cys-718 and Cys-767. A helical transmembrane segment spans residues 810–830; the sequence is VVIIAVVCCVVGTSLVWVVII. Asn-1014 carries N-linked (GlcNAc...) asparagine glycosylation. The interval 1019 to 1093 is disordered; that stretch reads DFSTGPEPGS…KERTDFREEN (75 aa). Basic and acidic residues predominate over residues 1083 to 1093; sequence DKERTDFREEN.

As to quaternary structure, interacts with EGFR, ERBB2 and ERBB4 (in vitro). In terms of tissue distribution, widely expressed.

It is found in the cell membrane. The protein localises to the cytoplasmic vesicle membrane. In terms of biological role, plays a role in craniofacial and inner ear morphogenesis during embryonic development. Acts within the otic vesicle epithelium to control formation of the lateral semicircular canal in the inner ear, possibly by restricting the expression of NTN1. The polypeptide is Leucine-rich repeats and immunoglobulin-like domains protein 3 (Lrig3) (Mus musculus (Mouse)).